A 280-amino-acid chain; its full sequence is Thiamine-phosphate synthase (280 aa).

Residues 1–64 are disordered; sequence MGWSGSPLTL…ATGRGGLRMT (64 aa). The span at 42–55 shows a compositional bias: basic and acidic residues; it reads GRGELRSRERRGEA. 4-amino-2-methyl-5-(diphosphooxymethyl)pyrimidine is bound by residues 104-108 and N141; that span reads QLRCK. Mg(2+) contacts are provided by D142 and D161. S179 contacts 4-amino-2-methyl-5-(diphosphooxymethyl)pyrimidine. 205–207 contributes to the 2-[(2R,5Z)-2-carboxy-4-methylthiazol-5(2H)-ylidene]ethyl phosphate binding site; the sequence is TPT. Residue K208 coordinates 4-amino-2-methyl-5-(diphosphooxymethyl)pyrimidine. G236 contributes to the 2-[(2R,5Z)-2-carboxy-4-methylthiazol-5(2H)-ylidene]ethyl phosphate binding site.

It belongs to the thiamine-phosphate synthase family. The cofactor is Mg(2+).

The catalysed reaction is 2-[(2R,5Z)-2-carboxy-4-methylthiazol-5(2H)-ylidene]ethyl phosphate + 4-amino-2-methyl-5-(diphosphooxymethyl)pyrimidine + 2 H(+) = thiamine phosphate + CO2 + diphosphate. It catalyses the reaction 2-(2-carboxy-4-methylthiazol-5-yl)ethyl phosphate + 4-amino-2-methyl-5-(diphosphooxymethyl)pyrimidine + 2 H(+) = thiamine phosphate + CO2 + diphosphate. It carries out the reaction 4-methyl-5-(2-phosphooxyethyl)-thiazole + 4-amino-2-methyl-5-(diphosphooxymethyl)pyrimidine + H(+) = thiamine phosphate + diphosphate. Its pathway is cofactor biosynthesis; thiamine diphosphate biosynthesis; thiamine phosphate from 4-amino-2-methyl-5-diphosphomethylpyrimidine and 4-methyl-5-(2-phosphoethyl)-thiazole: step 1/1. Functionally, condenses 4-methyl-5-(beta-hydroxyethyl)thiazole monophosphate (THZ-P) and 2-methyl-4-amino-5-hydroxymethyl pyrimidine pyrophosphate (HMP-PP) to form thiamine monophosphate (TMP). The polypeptide is Thiamine-phosphate synthase (Deinococcus radiodurans (strain ATCC 13939 / DSM 20539 / JCM 16871 / CCUG 27074 / LMG 4051 / NBRC 15346 / NCIMB 9279 / VKM B-1422 / R1)).